The sequence spans 601 residues: Phosphomethylpyrimidine synthase (601 aa).

Disordered regions lie at residues 1–31 (MTNKDARTPASSQTGEALASPQGDQEAGKSI) and 100–141 (AGRP…RDGQ). Residues 100 to 112 (AGRPVRPEDDGIK) show a composition bias toward basic and acidic residues. Substrate contacts are provided by residues Asn208, Met237, Tyr266, His302, 322 to 324 (SRG), 363 to 366 (DGLR), and Glu402. Residue His406 participates in Zn(2+) binding. Residue Tyr429 coordinates substrate. Zn(2+) is bound at residue His470. The [4Fe-4S] cluster site is built by Cys550, Cys553, and Cys558.

Belongs to the ThiC family. Requires [4Fe-4S] cluster as cofactor.

The enzyme catalyses 5-amino-1-(5-phospho-beta-D-ribosyl)imidazole + S-adenosyl-L-methionine = 4-amino-2-methyl-5-(phosphooxymethyl)pyrimidine + CO + 5'-deoxyadenosine + formate + L-methionine + 3 H(+). Its pathway is cofactor biosynthesis; thiamine diphosphate biosynthesis. Functionally, catalyzes the synthesis of the hydroxymethylpyrimidine phosphate (HMP-P) moiety of thiamine from aminoimidazole ribotide (AIR) in a radical S-adenosyl-L-methionine (SAM)-dependent reaction. The protein is Phosphomethylpyrimidine synthase of Streptomyces avermitilis (strain ATCC 31267 / DSM 46492 / JCM 5070 / NBRC 14893 / NCIMB 12804 / NRRL 8165 / MA-4680).